The sequence spans 358 residues: Chondroadherin (358 aa).

The first 20 residues, 1–20, serve as a signal peptide directing secretion; the sequence is MARALLFSLVFLAILLPALA. The LRRNT domain occupies 21–50; the sequence is ACPQNCHCHGDLQHVICDKVGLQKIPKVSE. An intrachain disulfide couples Cys-22 to Cys-37. 10 LRR repeats span residues 51-72, 75-96, 99-120, 123-144, 147-168, 171-192, 195-216, 219-240, 244-265, and 268-289; these read TTKL…SFRT, NLVS…AFRG, QLIY…AFDD, ELTY…LLSP, NLFI…AFQG, DLRW…SLDD, NLAK…ALSK, VVEE…AFQS, YLET…AFSG, and TLKH…FPFD. Ser-143 carries O-linked (GalNAc...) serine glycosylation. In terms of domain architecture, LRRCT spans 299–347; that stretch reads NPWKCTCQLRGLRRWLEAKASRPDATCSSPAKFKGQRIRDTDALRSCKS. 2 disulfide bridges follow: Cys-303-Cys-345 and Cys-305-Cys-325. The tract at residues 322–358 is disordered; the sequence is DATCSSPAKFKGQRIRDTDALRSCKSPTKRSKKAGRH. Positions 348–358 are enriched in basic residues; sequence PTKRSKKAGRH.

This sequence belongs to the small leucine-rich proteoglycan (SLRP) family. SLRP class IV subfamily. In terms of assembly, mostly monomeric. Interacts with collagen type II. As to expression, cartilage.

It localises to the secreted. The protein resides in the extracellular space. The protein localises to the extracellular matrix. In terms of biological role, promotes attachment of chondrocytes, fibroblasts, and osteoblasts. This binding is mediated (at least for chondrocytes and fibroblasts) by the integrin alpha(2)beta(1). May play an important role in the regulation of chondrocyte growth and proliferation. This Mus musculus (Mouse) protein is Chondroadherin (Chad).